Reading from the N-terminus, the 326-residue chain is Zinc finger protein 830 (326 aa).

Basic residues predominate over residues 1–11 (MAASRKGKAVK). Residues 1 to 37 (MAASRKGKAVKAVKQEDLRRLMQETRRDSGRQKRVES) form a disordered region. The span at 13-36 (VKQEDLRRLMQETRRDSGRQKRVE) shows a compositional bias: basic and acidic residues. The segment at 50–72 (CALCDAPVKNALLWQTHVLGKQH) adopts a C2H2-type zinc-finger fold. Residues 83–108 (TAPAHTPAPAHTPAHTPAAASSSSST) are compositionally biased toward low complexity. 3 disordered regions span residues 83-214 (TAPA…PVRD), 237-257 (EMRQVNSASDAIVAEDDEEGR), and 276-309 (EELRAKQETARSRRRSQRREEEPMQEEEPLEEEE). Over residues 180–195 (HSGSVSKAEQQESQEP) the composition is skewed to polar residues. The stretch at 224 to 295 (KDQLEREWEE…RSRRRSQRRE (72 aa)) forms a coiled coil. The span at 276-286 (EELRAKQETAR) shows a compositional bias: basic and acidic residues. Residues 298–309 (PMQEEEPLEEEE) are compositionally biased toward acidic residues.

The protein localises to the nucleus. It localises to the chromosome. The protein resides in the nucleus speckle. May act as an important regulator of the cell cycle that participates in the maintenance of genome integrity. The sequence is that of Zinc finger protein 830 from Danio rerio (Zebrafish).